The primary structure comprises 140 residues: Large ribosomal subunit protein uL11 (140 aa).

The protein belongs to the universal ribosomal protein uL11 family. In terms of assembly, part of the ribosomal stalk of the 50S ribosomal subunit. Interacts with L10 and the large rRNA to form the base of the stalk. L10 forms an elongated spine to which L12 dimers bind in a sequential fashion forming a multimeric L10(L12)X complex. Post-translationally, one or more lysine residues are methylated.

Its function is as follows. Forms part of the ribosomal stalk which helps the ribosome interact with GTP-bound translation factors. This is Large ribosomal subunit protein uL11 from Geobacter sp. (strain M21).